We begin with the raw amino-acid sequence, 593 residues long: Eukaryotic peptide chain release factor subunit 1 (593 aa).

This sequence belongs to the eukaryotic release factor 1 family. As to quaternary structure, heterodimer of two subunits, one of which binds GTP.

Its subcellular location is the cytoplasm. Functionally, directs the termination of nascent peptide synthesis (translation) in response to the termination codons UAA, UAG and UGA. The protein is Eukaryotic peptide chain release factor subunit 1 of Caenorhabditis elegans.